Reading from the N-terminus, the 43-residue chain is Protein PsbN (43 aa).

Residues 4–24 (ATVLSITFAVILIAITGLAVY) form a helical membrane-spanning segment.

Belongs to the PsbN family.

It is found in the cellular thylakoid membrane. May play a role in photosystem I and II biogenesis. This chain is Protein PsbN, found in Synechocystis sp. (strain ATCC 27184 / PCC 6803 / Kazusa).